The following is a 417-amino-acid chain: Serine hydroxymethyltransferase (417 aa).

Lysine 54 carries the N6-acetyllysine modification. Residues leucine 121 and 125–127 (GHL) contribute to the (6S)-5,6,7,8-tetrahydrofolate site. Lysine 229 bears the N6-(pyridoxal phosphate)lysine mark. Lysine 250, lysine 285, and lysine 354 each carry N6-acetyllysine. (6S)-5,6,7,8-tetrahydrofolate is bound at residue 355–357 (SPF). N6-acetyllysine is present on lysine 375.

Belongs to the SHMT family. In terms of assembly, homodimer. Pyridoxal 5'-phosphate is required as a cofactor.

It localises to the cytoplasm. It carries out the reaction (6R)-5,10-methylene-5,6,7,8-tetrahydrofolate + glycine + H2O = (6S)-5,6,7,8-tetrahydrofolate + L-serine. Its pathway is one-carbon metabolism; tetrahydrofolate interconversion. It participates in amino-acid biosynthesis; glycine biosynthesis; glycine from L-serine: step 1/1. Its function is as follows. Catalyzes the reversible interconversion of serine and glycine with tetrahydrofolate (THF) serving as the one-carbon carrier. This reaction serves as the major source of one-carbon groups required for the biosynthesis of purines, thymidylate, methionine, and other important biomolecules. Also exhibits THF-independent aldolase activity toward beta-hydroxyamino acids, producing glycine and aldehydes, via a retro-aldol mechanism. This Escherichia coli O157:H7 protein is Serine hydroxymethyltransferase.